We begin with the raw amino-acid sequence, 157 residues long: Transcription elongation factor GreA (157 aa).

The stretch at 1-75 (MSKEIILTQE…VETLINRAKV (75 aa)) forms a coiled coil.

This sequence belongs to the GreA/GreB family.

Necessary for efficient RNA polymerase transcription elongation past template-encoded arresting sites. The arresting sites in DNA have the property of trapping a certain fraction of elongating RNA polymerases that pass through, resulting in locked ternary complexes. Cleavage of the nascent transcript by cleavage factors such as GreA or GreB allows the resumption of elongation from the new 3'terminus. GreA releases sequences of 2 to 3 nucleotides. The protein is Transcription elongation factor GreA of Mycoplasma mycoides subsp. mycoides SC (strain CCUG 32753 / NCTC 10114 / PG1).